We begin with the raw amino-acid sequence, 712 residues long: Polyribonucleotide nucleotidyltransferase (712 aa).

D487 and D493 together coordinate Mg(2+). Positions 554–613 constitute a KH domain; the sequence is PKIITMTINPDKIRDVIGPSGKQINKIIEETGVKIDIEQDGTVFISSINQEMNDKAKKII. One can recognise an S1 motif domain in the interval 623 to 691; sequence GEIYEAKVKR…KQGRVNLSRK (69 aa).

Belongs to the polyribonucleotide nucleotidyltransferase family. It depends on Mg(2+) as a cofactor.

It is found in the cytoplasm. It carries out the reaction RNA(n+1) + phosphate = RNA(n) + a ribonucleoside 5'-diphosphate. Its function is as follows. Involved in mRNA degradation. Catalyzes the phosphorolysis of single-stranded polyribonucleotides processively in the 3'- to 5'-direction. In Bacillus cereus (strain ATCC 14579 / DSM 31 / CCUG 7414 / JCM 2152 / NBRC 15305 / NCIMB 9373 / NCTC 2599 / NRRL B-3711), this protein is Polyribonucleotide nucleotidyltransferase.